Reading from the N-terminus, the 485-residue chain is ATP synthase subunit beta (485 aa).

158 to 165 (GGAGVGKT) contributes to the ATP binding site.

Belongs to the ATPase alpha/beta chains family. In terms of assembly, F-type ATPases have 2 components, CF(1) - the catalytic core - and CF(0) - the membrane proton channel. CF(1) has five subunits: alpha(3), beta(3), gamma(1), delta(1), epsilon(1). CF(0) has four main subunits: a(1), b(1), b'(1) and c(9-12).

The protein localises to the cell inner membrane. The catalysed reaction is ATP + H2O + 4 H(+)(in) = ADP + phosphate + 5 H(+)(out). Functionally, produces ATP from ADP in the presence of a proton gradient across the membrane. The catalytic sites are hosted primarily by the beta subunits. This is ATP synthase subunit beta from Erythrobacter litoralis (strain HTCC2594).